The sequence spans 426 residues: MSYEDAEYIREMAMKHSEMFGEGIALIASENVMSPLAKEVMISDLESRYAEGLPHHRYYQGNYYVDLIEDRTNELLSKLFRTSQTDPRPISGTNANSAAIYALAGPGDLVATPSLSGGGHISAAEFGILGMRSVRTINYPYDMDTMTIDPDQASKMIIKEKPKVCLFGQSVFMFPAPLKEMAEAFHEVGCKVWYDGAHVLGLIAGGRFQDPLREGADIVTGSTHKTFPGPQHGVILGNTDDETWKAVRRAVFPGVLSNHHLNAMAALGITAAEELEFGKRYADDIISNAKVLAEELYANGFNVLAEKRGFTESHTMAVDVSKNGGGKYVAETLEKCGIILNKNLLPWDDNKKSQNPSGIRIGVQEATRVGMGKSEMKEIASLITRAIIRHEDPEKIKAEVKQLKSGFREVKYCYGKMDGYSYIKLI.

(6S)-5,6,7,8-tetrahydrofolate contacts are provided by residues L115 and 119 to 121 (GHI). K225 carries the post-translational modification N6-(pyridoxal phosphate)lysine.

It belongs to the SHMT family. Homodimer. It depends on pyridoxal 5'-phosphate as a cofactor.

Its subcellular location is the cytoplasm. It participates in amino-acid biosynthesis; glycine biosynthesis; glycine from L-serine: step 1/1. Functionally, catalyzes the reversible interconversion of serine and glycine with a modified folate serving as the one-carbon carrier. Also exhibits a pteridine-independent aldolase activity toward beta-hydroxyamino acids, producing glycine and aldehydes, via a retro-aldol mechanism. The chain is Serine hydroxymethyltransferase from Thermoplasma acidophilum (strain ATCC 25905 / DSM 1728 / JCM 9062 / NBRC 15155 / AMRC-C165).